The following is a 230-amino-acid chain: NAD(P)H-hydrate epimerase (230 aa).

The YjeF N-terminal domain occupies 11–218 (AIAVDQELFN…ALQRKYELNL (208 aa)). Position 61–65 (61–65 (NNGGD)) interacts with (6S)-NADPHX. 2 residues coordinate K(+): N62 and D126. (6S)-NADPHX is bound by residues 130 to 136 (GFSFKPP) and D159. Residue S162 participates in K(+) binding.

Belongs to the NnrE/AIBP family. Requires K(+) as cofactor.

It carries out the reaction (6R)-NADHX = (6S)-NADHX. The catalysed reaction is (6R)-NADPHX = (6S)-NADPHX. Catalyzes the epimerization of the S- and R-forms of NAD(P)HX, a damaged form of NAD(P)H that is a result of enzymatic or heat-dependent hydration. This is a prerequisite for the S-specific NAD(P)H-hydrate dehydratase to allow the repair of both epimers of NAD(P)HX. In Drosophila sechellia (Fruit fly), this protein is NAD(P)H-hydrate epimerase.